Reading from the N-terminus, the 899-residue chain is Protein translocase subunit SecA (899 aa).

Residues glutamine 87, 105–109, and aspartate 512 contribute to the ATP site; that span reads GEGKT. 2 disordered regions span residues 573 to 592 and 861 to 899; these read RRID…PGSS and ITVN…CCGK. 4 residues coordinate Zn(2+): cysteine 885, cysteine 887, cysteine 896, and cysteine 897.

It belongs to the SecA family. As to quaternary structure, monomer and homodimer. Part of the essential Sec protein translocation apparatus which comprises SecA, SecYEG and auxiliary proteins SecDF-YajC and YidC. Requires Zn(2+) as cofactor.

Its subcellular location is the cell inner membrane. The protein resides in the cytoplasm. It carries out the reaction ATP + H2O + cellular proteinSide 1 = ADP + phosphate + cellular proteinSide 2.. Its function is as follows. Part of the Sec protein translocase complex. Interacts with the SecYEG preprotein conducting channel. Has a central role in coupling the hydrolysis of ATP to the transfer of proteins into and across the cell membrane, serving as an ATP-driven molecular motor driving the stepwise translocation of polypeptide chains across the membrane. This is Protein translocase subunit SecA from Trichlorobacter lovleyi (strain ATCC BAA-1151 / DSM 17278 / SZ) (Geobacter lovleyi).